A 461-amino-acid chain; its full sequence is MAFRTALRRVAAVNAAPATRLAGAGAGAATAARRSYATASQLTHPDPTEDSPSGKMVREHVPYMVTTYSRPPPVFVKGKGSYLWDLEDRKYLDFTSGIAVNSLGHCDEEFSKIIAEQAQELVHASNLYYNPWTGALSKLLVESTKASGGMHDASSVFVCNSGSEANEAGIKFARKVGKVLDPSGSKVEIVCFQNAFHGRTMGSLSATPNPKYQAPFAPMVPGFKVGTYNDIAAIPSLVTEKTCSVIVEPIQGEGGVMPATEEFLVALGKRCREVGALLHYDEIQCGLARTGTFWAHSSLPKEAHPDILTTAKAIGNGFPIAATIVNEHVASKIKVGDHGTTFGGNPLACRLAHYIVGRLADKQLQEGVKAKSEVFLRGFEKLRNKFPSLVKEVRGKGLILGLQLSEDPTPVIKAARERGLLVITAGTNTLRFVPSLLVTEGEIEEGLKILEESFEAVMVKA.

The tract at residues 36 to 56 is disordered; it reads YATASQLTHPDPTEDSPSGKM. N6-(pyridoxal phosphate)lysine is present on lysine 312.

It belongs to the class-III pyridoxal-phosphate-dependent aminotransferase family. It depends on pyridoxal 5'-phosphate as a cofactor.

It is found in the mitochondrion matrix. It catalyses the reaction N(2)-acetyl-L-ornithine + 2-oxoglutarate = N-acetyl-L-glutamate 5-semialdehyde + L-glutamate. It participates in amino-acid biosynthesis; L-arginine biosynthesis; N(2)-acetyl-L-ornithine from L-glutamate: step 4/4. This chain is Acetylornithine aminotransferase, mitochondrial (arg-8), found in Neurospora crassa (strain ATCC 24698 / 74-OR23-1A / CBS 708.71 / DSM 1257 / FGSC 987).